The following is a 158-amino-acid chain: NAD(P)H-quinone oxidoreductase subunit J, chloroplastic (158 aa).

The protein belongs to the complex I 30 kDa subunit family. In terms of assembly, NDH is composed of at least 16 different subunits, 5 of which are encoded in the nucleus.

Its subcellular location is the plastid. The protein resides in the chloroplast thylakoid membrane. It catalyses the reaction a plastoquinone + NADH + (n+1) H(+)(in) = a plastoquinol + NAD(+) + n H(+)(out). It carries out the reaction a plastoquinone + NADPH + (n+1) H(+)(in) = a plastoquinol + NADP(+) + n H(+)(out). NDH shuttles electrons from NAD(P)H:plastoquinone, via FMN and iron-sulfur (Fe-S) centers, to quinones in the photosynthetic chain and possibly in a chloroplast respiratory chain. The immediate electron acceptor for the enzyme in this species is believed to be plastoquinone. Couples the redox reaction to proton translocation, and thus conserves the redox energy in a proton gradient. The sequence is that of NAD(P)H-quinone oxidoreductase subunit J, chloroplastic from Vitis vinifera (Grape).